A 411-amino-acid chain; its full sequence is MTAEGPLAPEDRVLDREAIGRLCVSLIAAEQQDLLREGRVGHHQMIGARLLTAGHPSPDDLLIDEDTLGLDSLLMLSLVTRVAGFFHLSDSNTEDYLLVRRRLGEWVDLIDHHHTLMGPKARFTFATSGSTAGPKPVTHSAAALLSEGQAIAKILTERPPEVRRVLSCVPAHHIYGFLWSCLFPSRRGLEAKQLANLSASGIMRHARSGDLVVGTPFIWEQFADLDYRLPGDVVGVTSGAPSTAETWRCASALGPARMLDIYGSTETGGIGWRERRDDPFRTLPDLACFHDTLSRLGRRLDLQDEIAWDKDGGFTILGRKDEILQVAGSNVSPAAVRDILLRNPRVRDAAVRLDGRRLKAVISVAEGADEAEIEIELRATAARHLPAPARPDRFLFATELPRTGAGKLADW.

The protein belongs to the ATP-dependent AMP-binding enzyme family.

The catalysed reaction is (E)-4-coumarate + ATP + CoA = (E)-4-coumaroyl-CoA + AMP + diphosphate. Functionally, converts p-coumaric acid into p-coumaryl CoA. This is necessary for the activation of the photoactive yellow protein (PYP) chromophore. This Cereibacter sphaeroides (strain ATCC 17023 / DSM 158 / JCM 6121 / CCUG 31486 / LMG 2827 / NBRC 12203 / NCIMB 8253 / ATH 2.4.1.) (Rhodobacter sphaeroides) protein is 4-coumarate--CoA ligase (pcl).